The primary structure comprises 142 residues: Large ribosomal subunit protein uL13 (142 aa).

Belongs to the universal ribosomal protein uL13 family. Part of the 50S ribosomal subunit.

In terms of biological role, this protein is one of the early assembly proteins of the 50S ribosomal subunit, although it is not seen to bind rRNA by itself. It is important during the early stages of 50S assembly. The polypeptide is Large ribosomal subunit protein uL13 (Buchnera aphidicola subsp. Acyrthosiphon pisum (strain 5A)).